The following is a 152-amino-acid chain: Ribosome maturation factor RimP (152 aa).

It belongs to the RimP family.

The protein localises to the cytoplasm. Its function is as follows. Required for maturation of 30S ribosomal subunits. The chain is Ribosome maturation factor RimP from Porphyromonas gingivalis (strain ATCC 33277 / DSM 20709 / CIP 103683 / JCM 12257 / NCTC 11834 / 2561).